A 79-amino-acid polypeptide reads, in one-letter code: Acyl carrier protein (79 aa).

One can recognise a Carrier domain in the interval 2–77 (SDIEERVKKI…SAIDYVNAHK (76 aa)). At serine 37 the chain carries O-(pantetheine 4'-phosphoryl)serine.

The protein belongs to the acyl carrier protein (ACP) family. Post-translationally, 4'-phosphopantetheine is transferred from CoA to a specific serine of apo-ACP by AcpS. This modification is essential for activity because fatty acids are bound in thioester linkage to the sulfhydryl of the prosthetic group.

It is found in the cytoplasm. It functions in the pathway lipid metabolism; fatty acid biosynthesis. Carrier of the growing fatty acid chain in fatty acid biosynthesis. The chain is Acyl carrier protein from Pseudoalteromonas atlantica (strain T6c / ATCC BAA-1087).